Consider the following 388-residue polypeptide: Acyl-CoA dehydrogenase fadE12 (388 aa).

It belongs to the acyl-CoA dehydrogenase family. FAD serves as cofactor.

It catalyses the reaction a 2,3-saturated acyl-CoA + A = a 2,3-dehydroacyl-CoA + AH2. This is Acyl-CoA dehydrogenase fadE12 (fadE12) from Mycobacterium tuberculosis (strain CDC 1551 / Oshkosh).